A 287-amino-acid polypeptide reads, in one-letter code: Glutamate racemase (287 aa).

Polar residues predominate over residues 1 to 15 (MATKPQDANTTSREA). The tract at residues 1 to 25 (MATKPQDANTTSREAITSKADSPPR) is disordered. Substrate is bound by residues 32–33 (DS) and 64–65 (YG). The Proton donor/acceptor role is filled by Cys-96. Residue 97 to 98 (NT) participates in substrate binding. The Proton donor/acceptor role is filled by Cys-208. 209–210 (TH) contacts substrate.

The protein belongs to the aspartate/glutamate racemases family.

The catalysed reaction is L-glutamate = D-glutamate. Its pathway is cell wall biogenesis; peptidoglycan biosynthesis. Its function is as follows. Provides the (R)-glutamate required for cell wall biosynthesis. The protein is Glutamate racemase of Yersinia pseudotuberculosis serotype O:1b (strain IP 31758).